The chain runs to 140 residues: Nucleoside diphosphate kinase (140 aa).

ATP-binding residues include Lys-11, Phe-59, Arg-87, Thr-93, Arg-104, and Asn-114. His-117 acts as the Pros-phosphohistidine intermediate in catalysis.

It belongs to the NDK family. As to quaternary structure, homotetramer. Mg(2+) serves as cofactor.

It is found in the cytoplasm. The catalysed reaction is a 2'-deoxyribonucleoside 5'-diphosphate + ATP = a 2'-deoxyribonucleoside 5'-triphosphate + ADP. It carries out the reaction a ribonucleoside 5'-diphosphate + ATP = a ribonucleoside 5'-triphosphate + ADP. Functionally, major role in the synthesis of nucleoside triphosphates other than ATP. The ATP gamma phosphate is transferred to the NDP beta phosphate via a ping-pong mechanism, using a phosphorylated active-site intermediate. The protein is Nucleoside diphosphate kinase of Rhodopseudomonas palustris (strain BisB5).